The sequence spans 226 residues: Ras-related protein RABA4a (226 aa).

Thr2 is modified (N-acetylthreonine). 24–31 (GDSAVGKS) provides a ligand contact to GTP. Positions 46–54 (SKATIGVEF) match the Effector region motif. Residues 72–76 (DTAGQ), 130–133 (NKSD), and 160–161 (SA) contribute to the GTP site. The segment at 189-226 (ASEDQENGNPGSLAGKKIDIVPGPGQVIPNKSNMCCNS) is disordered. The span at 217-226 (PNKSNMCCNS) shows a compositional bias: polar residues. 2 S-geranylgeranyl cysteine lipidation sites follow: Cys223 and Cys224.

Belongs to the small GTPase superfamily. Rab family. As to quaternary structure, interacts with TCTP1.

Its subcellular location is the cell membrane. In terms of biological role, intracellular vesicle trafficking and protein transport. The sequence is that of Ras-related protein RABA4a from Arabidopsis thaliana (Mouse-ear cress).